The primary structure comprises 727 residues: Telomere repeats-binding bouquet formation protein 1 (727 aa).

ARM repeat units follow at residues E101–G144 and N339–P382. The stretch at E398–T446 forms a coiled coil. The span at R457 to H468 shows a compositional bias: basic and acidic residues. The segment at R457–T493 is disordered. The interval Q523 to P662 is interaction with TERF1. The residue at position 648 (T648) is a Phosphothreonine. Positions K666–T719 constitute a Myb-like domain.

The protein belongs to the TERB1 family. As to quaternary structure, component of the MAJIN-TERB1-TERB2 complex, composed of MAJIN, TERB1 and TERB2. Interacts with TERF1, STAG3 and SUN1. Interacts (via Myb-like domain) with the cohesin complex; probably mediated via interaction with STAG3. In terms of processing, phosphorylated by CDK. Phosphorylation by CDK takes place in late prophase when the cap exchange is prominent. is important for the stabilization of telomere attachment but dispenable for the cap exchange.

Its subcellular location is the chromosome. The protein resides in the telomere. The protein localises to the nucleus inner membrane. Meiosis-specific telomere-associated protein involved in meiotic telomere attachment to the nucleus inner membrane, a crucial step for homologous pairing and synapsis. Component of the MAJIN-TERB1-TERB2 complex, which promotes telomere cap exchange by mediating attachment of telomeric DNA to the inner nuclear membrane and replacement of the protective cap of telomeric chromosomes: in early meiosis, the MAJIN-TERB1-TERB2 complex associates with telomeric DNA and the shelterin/telosome complex. During prophase, the complex matures and promotes release of the shelterin/telosome complex from telomeric DNA. In the MAJIN-TERB1-TERB2 complex, TERB1 probably mediates association with the shelterin/telosome complex via interaction with TERF1, promoting priming telomeric DNA attachment'. Promotes telomere association with the nuclear envelope and deposition of the SUN-KASH/LINC complex. Also recruits cohesin to telomeres to develop structural rigidity. The sequence is that of Telomere repeats-binding bouquet formation protein 1 from Homo sapiens (Human).